The primary structure comprises 252 residues: Imidazole glycerol phosphate synthase subunit HisF (252 aa).

Residues aspartate 13 and aspartate 132 contribute to the active site.

This sequence belongs to the HisA/HisF family. As to quaternary structure, heterodimer of HisH and HisF.

The protein resides in the cytoplasm. It catalyses the reaction 5-[(5-phospho-1-deoxy-D-ribulos-1-ylimino)methylamino]-1-(5-phospho-beta-D-ribosyl)imidazole-4-carboxamide + L-glutamine = D-erythro-1-(imidazol-4-yl)glycerol 3-phosphate + 5-amino-1-(5-phospho-beta-D-ribosyl)imidazole-4-carboxamide + L-glutamate + H(+). It participates in amino-acid biosynthesis; L-histidine biosynthesis; L-histidine from 5-phospho-alpha-D-ribose 1-diphosphate: step 5/9. Its function is as follows. IGPS catalyzes the conversion of PRFAR and glutamine to IGP, AICAR and glutamate. The HisF subunit catalyzes the cyclization activity that produces IGP and AICAR from PRFAR using the ammonia provided by the HisH subunit. In Campylobacter hominis (strain ATCC BAA-381 / DSM 21671 / CCUG 45161 / LMG 19568 / NCTC 13146 / CH001A), this protein is Imidazole glycerol phosphate synthase subunit HisF.